We begin with the raw amino-acid sequence, 783 residues long: Transcription factor Sp3 (783 aa).

The span at 1–12 shows a compositional bias: basic and acidic residues; that stretch reads MTAPEKPVKQEE. Positions 1–55 are disordered; the sequence is MTAPEKPVKQEEMAALDVDGGGGGGGHGEYLQQQQQQQQQHGNGAAAAAAQDTQP. Residues 19–28 are compositionally biased toward gly residues; the sequence is DGGGGGGGHG. Residues 29–51 are compositionally biased toward low complexity; the sequence is EYLQQQQQQQQQHGNGAAAAAAQ. Ser72 bears the Phosphoserine mark. Lys122 is covalently cross-linked (Glycyl lysine isopeptide (Lys-Gly) (interchain with G-Cter in SUMO)). The segment at 140–239 is transactivation domain (Gln-rich); sequence QYVLPLQNLQ…IPQTGQVQVQ (100 aa). Residues 302–340 are disordered; sequence GQAMDSSDNSERTGERVSPDVNETNADTDLFVPTSSSSQ. A compositionally biased stretch (basic and acidic residues) spans 310–319; that stretch reads NSERTGERVS. The segment covering 322–340 has biased composition (polar residues); it reads VNETNADTDLFVPTSSSSQ. The segment at 352–501 is transactivation domain (Gln-rich); it reads QQNTNSLTTT…TPVQTLTLGQ (150 aa). A 9aaTAD motif is present at residues 463–471; it reads ITWQTFQVQ. The repressor domain stretch occupies residues 536–622; it reads IQLHPGENAD…RGTNLGKKKQ (87 aa). N6-acetyllysine; alternate is present on Lys553. Residue Lys553 forms a Glycyl lysine isopeptide (Lys-Gly) (interchain with G-Cter in SUMO); alternate linkage. Residue Lys553 forms a Glycyl lysine isopeptide (Lys-Gly) (interchain with G-Cter in SUMO1); alternate linkage. Residue Lys553 forms a Glycyl lysine isopeptide (Lys-Gly) (interchain with G-Cter in SUMO2); alternate linkage. Ser565 and Ser568 each carry phosphoserine. A Glycyl lysine isopeptide (Lys-Gly) (interchain with G-Cter in SUMO2) cross-link involves residue Lys595. A C2H2-type 1 zinc finger spans residues 623-647; that stretch reads HICHIPGCGKVYGKTSHLRAHLRWH. Ser648 bears the Phosphoserine mark. C2H2-type zinc fingers lie at residues 653-677 and 683-705; these read FICN…RRTH and FVCP…IKTH.

The protein belongs to the Sp1 C2H2-type zinc-finger protein family. Interacts with HLTF; the interaction may be required for basal transcriptional activity of HLTF. Interacts with HDAC1; the interaction deacetylates SP3 and regulates its transcriptional activity. Interacts with HDAC2 (preferably the CK2-phosphorylated form); the interaction deacetylates SP3 and regulates its transcriptional activity. Ceramides can also regulate acetylation/deacetylation events through altering the interaction of HDAC with SP3. Interacts with MEIS2 isoform Meis2D and PBX1 isoform PBX1a. Acetylated by histone acetyltransferase p300, deacetylated by HDACs. Acetylation/deacetylation states regulate transcriptional activity. Acetylation appears to activate transcription. Alternate sumoylation and acetylation at Lys-553 also control transcriptional activity. In terms of processing, sumoylated on all isoforms. Sumoylated on 2 sites in longer isoforms with Lys-553 being the major site. Sumoylation at this site promotes nuclear localization to the nuclear periphery, nuclear dots and PML nuclear bodies. Sumoylation on Lys-553 represses the transactivation activity, except for the largest isoform which has little effect on transactivation. Alternate sumoylation and acetylation at Lys-553 also control transcriptional activity.

The protein resides in the nucleus. It localises to the PML body. Functionally, transcriptional factor that can act as an activator or repressor depending on isoform and/or post-translational modifications. Binds to GT and GC boxes promoter elements. Competes with SP1 for the GC-box promoters. Weak activator of transcription but can activate a number of genes involved in different processes such as cell-cycle regulation, hormone-induction and house-keeping. In Mus musculus (Mouse), this protein is Transcription factor Sp3 (Sp3).